We begin with the raw amino-acid sequence, 449 residues long: Nucleoprotein (449 aa).

The tract at residues 1-55 (MSFTPGKQSSSRASSGNRSGNGILKWADQSDQSRNVQTRGRRVQSKQTATSQQPS) is disordered. Low complexity predominate over residues 9-22 (SSSRASSGNRSGNG). 2 stretches are compositionally biased toward polar residues: residues 29–38 (QSDQSRNVQT) and 45–55 (SKQTATSQQPS). The segment at 52–194 (QQPSGGTVVP…GYYIEGSGRS (143 aa)) is RNA-binding. The region spanning 61-190 (PYYSWFSGIT…VLPQGYYIEG (130 aa)) is the CoV N NTD domain. Residues R106, R122, and R164 each coordinate RNA. 3 disordered regions span residues 158 to 231 (PADI…VTPD), 266 to 297 (ILNKPRQKRSPNKQCTVQQCFGKRGPNQNFGG), and 387 to 449 (MMNI…TSEI). Residue S167 is modified to Phosphoserine; by host. The residue at position 174 (T174) is a Phosphothreonine; by host. Position 191 is a phosphoserine; by host (S191). Polar residues-rich tracts occupy residues 194 to 204 (SAPNSRSTSRA) and 212 to 227 (GSRSRANSGNRTSTPG). Positions 259–384 (AKEVRQKILN…QNLNAYQHQE (126 aa)) constitute a CoV N CTD domain. Basic residues predominate over residues 266–276 (ILNKPRQKRSP). The dimerization stretch occupies residues 266–385 (ILNKPRQKRS…NLNAYQHQED (120 aa)). The residue at position 391 (S391) is a Phosphoserine; by host. Polar residues predominate over residues 400-410 (QKNGQVENDNI). A compositionally biased stretch (basic and acidic residues) spans 423 to 440 (KSRELTAEDISLLKKMDE). At S424 the chain carries Phosphoserine; by host. Position 428 is a phosphothreonine; by host (T428).

It belongs to the betacoronavirus nucleocapsid protein family. As to quaternary structure, homooligomer. Both monomeric and oligomeric forms interact with RNA. Interacts with protein M. Interacts with NSP3; this interaction serves to tether the genome to the newly translated replicase-transcriptase complex at a very early stage of infection. In terms of processing, ADP-ribosylated. The ADP-ribosylation is retained in the virion during infection. Phosphorylated on serine and threonine residues.

The protein localises to the virion. It is found in the host endoplasmic reticulum-Golgi intermediate compartment. Its subcellular location is the host Golgi apparatus. Packages the positive strand viral genome RNA into a helical ribonucleocapsid (RNP) and plays a fundamental role during virion assembly through its interactions with the viral genome and membrane protein M. Plays an important role in enhancing the efficiency of subgenomic viral RNA transcription as well as viral replication. The protein is Nucleoprotein of Sus scrofa (Pig).